A 483-amino-acid polypeptide reads, in one-letter code: 1-aminocyclopropane-1-carboxylate synthase 2 (483 aa).

K275 carries the post-translational modification N6-(pyridoxal phosphate)lysine.

Belongs to the class-I pyridoxal-phosphate-dependent aminotransferase family. Pyridoxal 5'-phosphate is required as a cofactor.

The enzyme catalyses S-adenosyl-L-methionine = 1-aminocyclopropane-1-carboxylate + S-methyl-5'-thioadenosine + H(+). Its pathway is alkene biosynthesis; ethylene biosynthesis via S-adenosyl-L-methionine; ethylene from S-adenosyl-L-methionine: step 1/2. Functionally, catalyzes the formation of 1-aminocyclopropane-1-carboxylate, a direct precursor of ethylene in higher plants. Involved in defense response by producing ethylene after pathogen infection. Involved in several phosphate deficiency-induced adaptive responses, such as lateral root elongation. The polypeptide is 1-aminocyclopropane-1-carboxylate synthase 2 (Oryza sativa subsp. japonica (Rice)).